We begin with the raw amino-acid sequence, 201 residues long: Small ribosomal subunit protein uS4c (201 aa).

Residues 16-43 form a disordered region; sequence GALPGLTSKKPRSASDLRNQSRSGKRSQ. Residues 89–169 enclose the S4 RNA-binding domain; it reads MRLDNILFRL…LPKHLTLHSF (81 aa).

Belongs to the universal ribosomal protein uS4 family. As to quaternary structure, part of the 30S ribosomal subunit. Contacts protein S5. The interaction surface between S4 and S5 is involved in control of translational fidelity.

The protein resides in the plastid. It localises to the chloroplast. In terms of biological role, one of the primary rRNA binding proteins, it binds directly to 16S rRNA where it nucleates assembly of the body of the 30S subunit. With S5 and S12 plays an important role in translational accuracy. The polypeptide is Small ribosomal subunit protein uS4c (rps4) (Nymphaea alba (White water-lily)).